A 651-amino-acid polypeptide reads, in one-letter code: Probable ATP-dependent helicase MJ0942 (651 aa).

The region spanning 6-255 (YIKEKFPYPK…EIIEKYLTSR (250 aa)) is the Helicase ATP-binding domain. 41-48 (APTGVGKT) is a binding site for ATP. The [4Fe-4S] cluster site is built by Cys-102, Cys-149, and Cys-154. Positions 195–198 (DEAH) match the DEAH box motif. In terms of domain architecture, Helicase C-terminal spans 449 to 638 (NLLKILEAIN…NYEVMSLDMA (190 aa)).

It belongs to the helicase family. DinG subfamily. [4Fe-4S] cluster is required as a cofactor.

It carries out the reaction Couples ATP hydrolysis with the unwinding of duplex DNA at the replication fork by translocating in the 5'-3' direction. This creates two antiparallel DNA single strands (ssDNA). The leading ssDNA polymer is the template for DNA polymerase III holoenzyme which synthesizes a continuous strand.. The enzyme catalyses ATP + H2O = ADP + phosphate + H(+). In terms of biological role, might be a 5'-3' DNA helicase. The polypeptide is Probable ATP-dependent helicase MJ0942 (Methanocaldococcus jannaschii (strain ATCC 43067 / DSM 2661 / JAL-1 / JCM 10045 / NBRC 100440) (Methanococcus jannaschii)).